The following is a 930-amino-acid chain: GPI ethanolamine phosphate transferase 1 (930 aa).

Over 1–8 (MARLGRTG) the chain is Cytoplasmic. Residues 9–29 (FLTLAVVFHLIYAYSIFDIYF) traverse the membrane as a helical segment. The Lumenal segment spans residues 30–466 (VSPIVSGMRP…LQTYDWLFLR (437 aa)). Asn-148 is a glycosylation site (N-linked (GlcNAc...) asparagine). Residues 467–487 (TIVTFGYVGWIAYALTTVIHL) traverse the membrane as a helical segment. Residues 488–498 (HVLHGASESDR) lie on the Cytoplasmic side of the membrane. Residues 499–519 (TTASISFFSSVLVALFSVFLY) traverse the membrane as a helical segment. Residues 520-521 (QG) are Lumenal-facing. Residues 522–542 (SPWRYYLYGFFPIFFWEEVFA) traverse the membrane as a helical segment. At 543–569 (RRKAFHAGRAGALLLPKRDLHSNKVED) the chain is on the cytoplasmic side. The helical transmembrane segment at 570–590 (IDTITYGGAFMLLTGLLYLLF) threads the bilayer. Residues 591–611 (EDEILGTSHQPAAVSRKGSRN) lie on the Lumenal side of the membrane. A helical membrane pass occupies residues 612 to 632 (IMGLQLGMVLLALIVTRSSAA). The Cytoplasmic portion of the chain corresponds to 633–639 (SLQAKQG). A helical transmembrane segment spans residues 640-660 (LPFGNQVVGWGVLIASLLLPF). The Lumenal segment spans residues 661-684 (AHRLYPNSHYLHRLMIIFLTFSPT). The chain crosses the membrane as a helical span at residues 685–705 (FIILTISYEGLFYFAFCMTLV). The Cytoplasmic segment spans residues 706–761 (TWVRLEHATYVYTAKPVAKQAQETIEPPKKANPGATTVVDGETYRFRTLTVSDARV). A helical transmembrane segment spans residues 762 to 782 (ALFFFFLLQSAFFSTGNIASI). Residues 783–803 (SSFSLDSVYRLIPVFNPFSQG) are Lumenal-facing. The chain crosses the membrane as a helical span at residues 804–824 (ALLILKLLIPFAIISANLGIL). Topologically, residues 825–833 (NRRLEVAPS) are cytoplasmic. The chain crosses the membrane as a helical span at residues 834-854 (ALFMVVMAISDVMTLNFFYMV). The Lumenal segment spans residues 855-870 (RDEGSWLDIGTTISHF). The helical transmembrane segment at 871 to 891 (CIASFLCTFVAGLEFLSEVFI) threads the bilayer. At 892 to 930 (SGVDFGLRTDAITASVPDIVNGITSKGQKDVPNGVEDKE) the chain is on the cytoplasmic side.

It belongs to the PIGG/PIGN/PIGO family. PIGN subfamily.

It is found in the endoplasmic reticulum membrane. The protein operates within glycolipid biosynthesis; glycosylphosphatidylinositol-anchor biosynthesis. Ethanolamine phosphate transferase involved in glycosylphosphatidylinositol-anchor biosynthesis. Transfers ethanolamine phosphate to the first alpha-1,4-linked mannose of the glycosylphosphatidylinositol precursor of GPI-anchor. The polypeptide is GPI ethanolamine phosphate transferase 1 (mcd4) (Emericella nidulans (strain FGSC A4 / ATCC 38163 / CBS 112.46 / NRRL 194 / M139) (Aspergillus nidulans)).